Reading from the N-terminus, the 264-residue chain is ATP synthase subunit a (264 aa).

The next 5 helical transmembrane spans lie at 39–59 (LDTL…FYIV), 97–117 (VAPL…MDLV), 139–159 (TADP…VIFY), 205–225 (LFGN…LPWW), and 239–259 (LLVI…YISL).

This sequence belongs to the ATPase A chain family. In terms of assembly, F-type ATPases have 2 components, CF(1) - the catalytic core - and CF(0) - the membrane proton channel. CF(1) has five subunits: alpha(3), beta(3), gamma(1), delta(1), epsilon(1). CF(0) has three main subunits: a(1), b(2) and c(9-12). The alpha and beta chains form an alternating ring which encloses part of the gamma chain. CF(1) is attached to CF(0) by a central stalk formed by the gamma and epsilon chains, while a peripheral stalk is formed by the delta and b chains.

The protein localises to the cell inner membrane. Functionally, key component of the proton channel; it plays a direct role in the translocation of protons across the membrane. The protein is ATP synthase subunit a of Coxiella burnetii (strain RSA 331 / Henzerling II).